The chain runs to 146 residues: Large ribosomal subunit protein uL15 (146 aa).

Residues 1–13 (MKLHELKAAEGSR) show a composition bias toward basic and acidic residues. The segment at 1–61 (MKLHELKAAE…GGQTPLFRRM (61 aa)) is disordered. Gly residues-rich tracts occupy residues 23-35 (TSSGNGKTSGRGQ) and 42-52 (SGGGVRLGFEG).

The protein belongs to the universal ribosomal protein uL15 family. As to quaternary structure, part of the 50S ribosomal subunit.

Binds to the 23S rRNA. This is Large ribosomal subunit protein uL15 from Streptococcus uberis (strain ATCC BAA-854 / 0140J).